A 211-amino-acid chain; its full sequence is Bcl-2 homologous antagonist/killer (211 aa).

Residues 1-28 are disordered; that stretch reads MASGQGPGPPRQECGEPALPSASEEQVA. Alanine 2 is modified (N-acetylalanine). The BH3 signature appears at 74–88; the sequence is VGRQLAIIGDDINRR. The short motif at 117–136 is the BH1 element; the sequence is SLFESGINWGRVVALLGFGY. Aspartate 160 and histidine 164 together coordinate Zn(2+). The short motif at 169 to 184 is the BH2 element; that stretch reads RWIAQRGGWVAALNLG. The chain crosses the membrane as a helical span at residues 188-205; it reads ILNVLVVLGVVLLGQFVV.

The protein belongs to the Bcl-2 family. As to quaternary structure, homodimer. Formation of the homodimer is zinc-dependent. Forms heterodimers with BCL2 and BCL2L1 isoform Bcl-X(L). Forms heterooligomers with BAX. Interacts with BCL2A1. Interacts with RTL10/BOP. Interacts with VDAC1. Interacts with GIMAP3/IAN4 and GIMAP5/IAN5. (Microbial infection) Interacts with vaccinia virus protein F1. In terms of assembly, (Microbial infection) Interacts with myxoma virus protein M11L. As to quaternary structure, (Microbial infection) Interacts with Epstein-Barr virus protein BALF1. (Microbial infection) Interacts with adenovirus protein E1B 19K. Expressed in a wide variety of tissues, with highest levels in the heart and skeletal muscle.

It localises to the mitochondrion outer membrane. Functionally, plays a role in the mitochondrial apoptotic process. Upon arrival of cell death signals, promotes mitochondrial outer membrane (MOM) permeabilization by oligomerizing to form pores within the MOM. This releases apoptogenic factors into the cytosol, including cytochrome c, promoting the activation of caspase 9 which in turn processes and activates the effector caspases. This chain is Bcl-2 homologous antagonist/killer (BAK1), found in Homo sapiens (Human).